The sequence spans 99 residues: DNA-directed RNA polymerase subunit omega (99 aa).

Belongs to the RNA polymerase subunit omega family. In terms of assembly, the RNAP catalytic core consists of 2 alpha, 1 beta, 1 beta' and 1 omega subunit. When a sigma factor is associated with the core the holoenzyme is formed, which can initiate transcription.

It carries out the reaction RNA(n) + a ribonucleoside 5'-triphosphate = RNA(n+1) + diphosphate. In terms of biological role, promotes RNA polymerase assembly. Latches the N- and C-terminal regions of the beta' subunit thereby facilitating its interaction with the beta and alpha subunits. The protein is DNA-directed RNA polymerase subunit omega of Xylella fastidiosa (strain Temecula1 / ATCC 700964).